A 128-amino-acid chain; its full sequence is Large ribosomal subunit protein uL22 (128 aa).

Belongs to the universal ribosomal protein uL22 family. As to quaternary structure, part of the 50S ribosomal subunit.

This protein binds specifically to 23S rRNA; its binding is stimulated by other ribosomal proteins, e.g. L4, L17, and L20. It is important during the early stages of 50S assembly. It makes multiple contacts with different domains of the 23S rRNA in the assembled 50S subunit and ribosome. Its function is as follows. The globular domain of the protein is located near the polypeptide exit tunnel on the outside of the subunit, while an extended beta-hairpin is found that lines the wall of the exit tunnel in the center of the 70S ribosome. This is Large ribosomal subunit protein uL22 from Prochlorococcus marinus (strain MIT 9301).